A 178-amino-acid polypeptide reads, in one-letter code: ATP synthase subunit b, chloroplastic (178 aa).

The chain crosses the membrane as a helical span at residues 23–43 (IFETNIINLAAVVAIVISFVG).

The protein belongs to the ATPase B chain family. In terms of assembly, F-type ATPases have 2 components, F(1) - the catalytic core - and F(0) - the membrane proton channel. F(1) has five subunits: alpha(3), beta(3), gamma(1), delta(1), epsilon(1). F(0) has four main subunits: a(1), b(1), b'(1) and c(10-14). The alpha and beta chains form an alternating ring which encloses part of the gamma chain. F(1) is attached to F(0) by a central stalk formed by the gamma and epsilon chains, while a peripheral stalk is formed by the delta, b and b' chains.

It localises to the plastid. The protein resides in the chloroplast thylakoid membrane. In terms of biological role, f(1)F(0) ATP synthase produces ATP from ADP in the presence of a proton or sodium gradient. F-type ATPases consist of two structural domains, F(1) containing the extramembraneous catalytic core and F(0) containing the membrane proton channel, linked together by a central stalk and a peripheral stalk. During catalysis, ATP synthesis in the catalytic domain of F(1) is coupled via a rotary mechanism of the central stalk subunits to proton translocation. Its function is as follows. Component of the F(0) channel, it forms part of the peripheral stalk, linking F(1) to F(0). The polypeptide is ATP synthase subunit b, chloroplastic (Tetradesmus obliquus (Green alga)).